Here is a 1640-residue protein sequence, read N- to C-terminus: Basal body protein 10 (1640 aa).

The homodimerization stretch occupies residues 11-64; sequence VLRRKLEALGYSDPLEPASLQLVQKLVEDLVHTTDSYTAVKQQCAKQAQEIAAF. Residues 93–148 adopt a coiled-coil conformation; it reads AERHEREAREHYTAVKRLEDTIAELSYWKHAAAEKLASADKENAGLRKRCEELAKL. Positions 154–185 are disordered; that stretch reads SGAATPQSVAPKISSRSPIRVAPPPSPPRPRQ. The span at 174-183 shows a compositional bias: pro residues; that stretch reads VAPPPSPPRP. Coiled coils occupy residues 191–232, 260–332, 370–411, 461–722, 758–960, 1010–1030, 1059–1086, 1129–1282, 1323–1494, and 1523–1557; these read LQAA…RDVE, ILQL…LQDT, VERL…AQSR, FAAL…AEAD, ARQM…AQAA, GEAL…LVRE, RASA…LAAE, INQY…LQAS, AKDQ…AERD, and AELA…TRAT. Positions 1592–1618 are enriched in low complexity; the sequence is GQGQVQGPAGTAPAAAAGAPGPQPGQA. The interval 1592 to 1640 is disordered; that stretch reads GQGQVQGPAGTAPAAAAGAPGPQPGQAQAGGFGGAHGGGSISLSGGPRR. A compositionally biased stretch (gly residues) spans 1619–1631; sequence QAGGFGGAHGGGS.

It belongs to the CEP135/TSGA10 family. As to quaternary structure, homodimer.

The protein resides in the cytoplasm. It is found in the cytoskeleton. The protein localises to the microtubule organizing center. It localises to the centrosome. Its subcellular location is the centriole. Its function is as follows. Microtubule-binding protein essential for cytoskeletal organization (e.g. rootlet microtubule bundles) and flagellar basal body/centriole assembly. The chain is Basal body protein 10 from Chlamydomonas reinhardtii (Chlamydomonas smithii).